We begin with the raw amino-acid sequence, 449 residues long: MTTTISQLNITPIKFTINDLIVDPVSLSENFNCPICEECIMDVNKCEALQCKEGHVHCRLCWMKSLESKKECMTCRTRVNSVDSLSKNIYLQKEFRNKKIFCPNLFRILNSGKIEIDEKFGCKEILKVDELEGHIKECQFQFIECPNDKECKTRLRKNQLKDHAEKCKKLKSECEFCGEKGLVIDDSKVHYSECEKFPIKCPQNCNSPTFNCTIERGRIKYHIENECPFTVIQCKYREAGCMLEFPRSELSEHMKLIDHSKYMEATIDQHICKFEKSEKEYKKLELEYNRLKDDFKILQSELKVIRELKFNYQNKWVITNWSQKLQDYPKPKSIESPEFMVGNLKFKIQFYPNGGLSDESKDFLSIYLYKFDDQTPSKVQFSFELLNKDFTRNRKLASTNIFHTENKWGWRSFINNSLVTTQTGFVIQNSVTLNINIEILPEEKEAFTS.

The RING-type; degenerate zinc-finger motif lies at 33–76; that stretch reads CPICEECIMDVNKCEALQCKEGHVHCRLCWMKSLESKKECMTCR. TRAF-type zinc fingers lie at residues 133–187 and 189–251; these read GHIK…IDDS and VHYS…SELS. Positions 263-309 form a coiled coil; the sequence is MEATIDQHICKFEKSEKEYKKLELEYNRLKDDFKILQSELKVIRELK. In terms of domain architecture, MATH spans 311-437; the sequence is NYQNKWVITN…QNSVTLNINI (127 aa).

Belongs to the TNF receptor-associated factor family. A subfamily.

It localises to the cytoplasm. Functionally, probable adapter protein and signal transducer that links members of the tumor necrosis factor receptor family to different signaling pathways by association with the receptor cytoplasmic domain and kinases. The sequence is that of TNF receptor-associated factor family protein DDB_G0272340 from Dictyostelium discoideum (Social amoeba).